The chain runs to 107 residues: uncharacterized protein (107 aa).

Residues 86–107 (KRAETARLPAATPQKRTGPARG) form a disordered region.

This is an uncharacterized protein from Saccharomyces cerevisiae (strain ATCC 204508 / S288c) (Baker's yeast).